The sequence spans 354 residues: Non-structural protein NS2 (354 aa).

2 disordered regions span residues 163 to 196 and 229 to 269; these read NERE…DNEA and DERD…THIT. 2 stretches are compositionally biased toward basic and acidic residues: residues 178-196 and 237-249; these read SREE…DNEA and DERG…KTLS. Acidic residues predominate over residues 250 to 260; the sequence is DDDDQGEDASD.

Single-stranded RNA-binding protein. The protein is Non-structural protein NS2 (Segment-8) of Bluetongue virus 17 (isolate USA) (BTV 17).